We begin with the raw amino-acid sequence, 258 residues long: Lipoprotein-releasing system ATP-binding protein LolD (258 aa).

One can recognise an ABC transporter domain in the interval 5–244; the sequence is LQCCQLSKSY…PTSSITDPAN (240 aa). 41–48 serves as a coordination point for ATP; it reads GSSGCGKS. The segment at 222-258 is disordered; it reads LRPLSDNSEQALPPTSSITDPANNIKDNEPQANERHV. The segment covering 226 to 243 has biased composition (polar residues); that stretch reads SDNSEQALPPTSSITDPA. The segment covering 247-258 has biased composition (basic and acidic residues); sequence KDNEPQANERHV.

It belongs to the ABC transporter superfamily. Lipoprotein translocase (TC 3.A.1.125) family. The complex is composed of two ATP-binding proteins (LolD) and two transmembrane proteins (LolC and LolE).

It localises to the cell inner membrane. In terms of biological role, part of the ABC transporter complex LolCDE involved in the translocation of mature outer membrane-directed lipoproteins, from the inner membrane to the periplasmic chaperone, LolA. Responsible for the formation of the LolA-lipoprotein complex in an ATP-dependent manner. This is Lipoprotein-releasing system ATP-binding protein LolD from Colwellia psychrerythraea (strain 34H / ATCC BAA-681) (Vibrio psychroerythus).